We begin with the raw amino-acid sequence, 485 residues long: Glutamyl-tRNA(Gln) amidotransferase subunit A (485 aa).

Residues lysine 78 and serine 153 each act as charge relay system in the active site. Serine 177 functions as the Acyl-ester intermediate in the catalytic mechanism.

Belongs to the amidase family. GatA subfamily. In terms of assembly, heterotrimer of A, B and C subunits.

The enzyme catalyses L-glutamyl-tRNA(Gln) + L-glutamine + ATP + H2O = L-glutaminyl-tRNA(Gln) + L-glutamate + ADP + phosphate + H(+). Functionally, allows the formation of correctly charged Gln-tRNA(Gln) through the transamidation of misacylated Glu-tRNA(Gln) in organisms which lack glutaminyl-tRNA synthetase. The reaction takes place in the presence of glutamine and ATP through an activated gamma-phospho-Glu-tRNA(Gln). This Syntrophus aciditrophicus (strain SB) protein is Glutamyl-tRNA(Gln) amidotransferase subunit A.